The following is a 317-amino-acid chain: Adenine deaminase (317 aa).

Residues H14, H16, and H194 each contribute to the Zn(2+) site. Catalysis depends on E197, which acts as the Proton donor. D275 serves as a coordination point for Zn(2+). D276 lines the substrate pocket.

The protein belongs to the metallo-dependent hydrolases superfamily. Adenosine and AMP deaminases family. Adenine deaminase type 2 subfamily. Zn(2+) is required as a cofactor.

It carries out the reaction adenine + H2O + H(+) = hypoxanthine + NH4(+). In terms of biological role, catalyzes the hydrolytic deamination of adenine to hypoxanthine. Plays an important role in the purine salvage pathway and in nitrogen catabolism. In Pseudomonas syringae pv. syringae (strain B728a), this protein is Adenine deaminase.